Consider the following 106-residue polypeptide: Thioredoxin-2 (106 aa).

Positions 1–106 constitute a Thioredoxin domain; the sequence is MVYQVKDKAD…RLEDVIKANI (106 aa). Residues Cys32 and Cys35 each act as nucleophile in the active site. Residues Cys32 and Cys35 are joined by a disulfide bond.

The protein belongs to the thioredoxin family. In terms of assembly, monomer.

Functionally, participates in various redox reactions through the reversible oxidation of its active center dithiol to a disulfide and catalyzes dithiol-disulfide exchange reactions. As a reducing substrate of peroxiredoxin 1, thioredoxin 2 is preferred over thioredoxin 1. This chain is Thioredoxin-2, found in Drosophila melanogaster (Fruit fly).